A 295-amino-acid chain; its full sequence is Tissue factor (295 aa).

The first 28 residues, 1–28 (MAIPMRPRLLAALAPTFLGFLLLQVAVG), serve as a signal peptide directing secretion. At 29–252 (AGTPPGKAFN…TEQWKSVLGE (224 aa)) the chain is on the extracellular side. N-linked (GlcNAc...) asparagine glycans are attached at residues asparagine 38 and asparagine 58. Cysteine 76 and cysteine 84 are oxidised to a cystine. 4 N-linked (GlcNAc...) asparagine glycosylation sites follow: asparagine 95, asparagine 109, asparagine 170, and asparagine 201. A disulfide bond links cysteine 219 and cysteine 242. The short motif at 246-248 (WKS) is the WKS motif element. A helical transmembrane segment spans residues 253–275 (TLIIVGAVVFLVTVFIILLTISL). Residue cysteine 276 is the site of S-palmitoyl cysteine attachment. Residues 276–295 (CKRRKNRAGQKRKNTPSRLA) are Cytoplasmic-facing.

Belongs to the tissue factor family. As to quaternary structure, interacts with HSPE; the interaction, inhibited by heparin, promotes the generation of activated factor X and activates coagulation in the presence of activated factor VII.

It localises to the membrane. Initiates blood coagulation by forming a complex with circulating factor VII or VIIa. The [TF:VIIa] complex activates factors IX or X by specific limited proteolysis. TF plays a role in normal hemostasis by initiating the cell-surface assembly and propagation of the coagulation protease cascade. This chain is Tissue factor (F3), found in Rattus norvegicus (Rat).